Here is an 860-residue protein sequence, read N- to C-terminus: Late endosome and vacuole interface protein 11 (860 aa).

The segment at 19–45 is disordered; that stretch reads EIINNSDHSSSHSTSHEEEDEEEDDTE. The segment covering 20 to 31 has biased composition (low complexity); the sequence is IINNSDHSSSHS. The segment covering 35-45 has biased composition (acidic residues); sequence EEEDEEEDDTE. Residues 84–138 form a BED-type zinc finger; sequence KNIAKFWSHFLAIEKKLTKVKCKHCGEILTRSDASLTKTFRSHLKTKHNISANKN. Cys105, Cys108, His126, and His131 together coordinate Zn(2+).

This sequence belongs to the VID22 family.

Its subcellular location is the nucleus. In terms of biological role, involved in vacuolar processing and morphology. This is Late endosome and vacuole interface protein 11 (ENV11) from Saccharomyces cerevisiae (strain ATCC 204508 / S288c) (Baker's yeast).